The following is a 608-amino-acid chain: Cytoplasmic dynein 1 intermediate chain 1 (608 aa).

Basic and acidic residues-rich tracts occupy residues 1–13 (MSDKSDLKAELER) and 20–60 (QIRE…RETE). The interval 1–106 (MSDKSDLKAE…SGDLGPLTRR (106 aa)) is disordered. S2 bears the N-acetylserine mark. S50 carries the phosphoserine modification. The span at 70-79 (PEPPLVPTPM) shows a compositional bias: pro residues. The span at 80–90 (SPSSKSVSTPS) shows a compositional bias: low complexity. A Phosphoserine modification is found at S83. Phosphothreonine is present on T88. S90, S94, and S97 each carry phosphoserine. An interaction with DYNLT1 region spans residues 110–126 (KLGVSKITQVDFLPREV). A disordered region spans residues 132-184 (ETQTPLATHQSEEDEDDEEMVEPKGDQDSEQENEDKKQEVKEAPPRELTEEEK). T139 is subject to Phosphothreonine. S142 and S160 each carry phosphoserine. Positions 165–184 (EDKKQEVKEAPPRELTEEEK) are enriched in basic and acidic residues. WD repeat units lie at residues 248-297 (SKHR…TTPE), 301-341 (HCQS…RTPV), 350-391 (AHTH…TPQE), 400-440 (SKPV…AGIG), 445-490 (GHQG…PLYS), 493-533 (DNAD…EVPT), and 539-578 (EGASALNRVRWAQGGKEVAVGDSEGRIWIYDVGELAVPHN). The residue at position 598 (S598) is a Phosphoserine.

This sequence belongs to the dynein intermediate chain family. As to quaternary structure, homodimer. The cytoplasmic dynein 1 complex consists of two catalytic heavy chains (HCs) and a number of non-catalytic subunits presented by intermediate chains (ICs), light intermediate chains (LICs) and light chains (LCs); the composition seems to vary in respect to the IC, LIC and LC composition. The heavy chain homodimer serves as a scaffold for the probable homodimeric assembly of the respective non-catalytic subunits. The ICs and LICs bind directly to the HC dimer and the LCs assemble on the IC dimer. Interacts with DYNC1H1. Interacts with DYNLT1 and DYNLT3. Interacts with DCTN1. Interacts with MCRS1; the interaction is required for the proper distribution of centriolar satellites.

Its subcellular location is the cytoplasm. The protein localises to the chromosome. The protein resides in the centromere. It localises to the kinetochore. It is found in the cytoskeleton. Its subcellular location is the spindle pole. Its function is as follows. Acts as one of several non-catalytic accessory components of the cytoplasmic dynein 1 complex that are thought to be involved in linking dynein to cargos and to adapter proteins that regulate dynein function. Cytoplasmic dynein 1 acts as a motor for the intracellular retrograde motility of vesicles and organelles along microtubules. The intermediate chains mediate the binding of dynein to dynactin via its 150 kDa component (p150-glued) DCTN1. May play a role in mediating the interaction of cytoplasmic dynein with membranous organelles and kinetochores. The chain is Cytoplasmic dynein 1 intermediate chain 1 (DYNC1I1) from Bos taurus (Bovine).